Reading from the N-terminus, the 149-residue chain is Large ribosomal subunit protein uL22c (149 aa).

This sequence belongs to the universal ribosomal protein uL22 family. As to quaternary structure, part of the 50S ribosomal subunit.

The protein localises to the plastid. The protein resides in the chloroplast. In terms of biological role, this protein binds specifically to 23S rRNA. The globular domain of the protein is located near the polypeptide exit tunnel on the outside of the subunit, while an extended beta-hairpin is found that lines the wall of the exit tunnel in the center of the 70S ribosome. This Hordeum vulgare (Barley) protein is Large ribosomal subunit protein uL22c (rpl22).